A 166-amino-acid polypeptide reads, in one-letter code: Protein C2-DOMAIN ABA-RELATED 11 (166 aa).

Met1 is modified (N-acetylmethionine). Residues 1 to 103 (MGEPLGLLQV…ISVARLRHVV (103 aa)) form the C2 domain. Gly2 is subject to N-acetylglycine; in Protein C2-DOMAIN ABA-RELATED 11, N-terminally processed. The Ca(2+) site is built by Arg21, Asp22, Asp27, Asp73, Lys74, Asp75, and Asp81.

It belongs to the plant CAR protein family. In terms of assembly, binds to PYR/PYL/RCAR abscisic acid intracellular receptors in an ABA-independent manner, both at the plasma membrane and in the nucleus.

The protein resides in the cell membrane. It is found in the nucleus. Functionally, stimulates the GTPase/ATPase activities of Obg-like ATPases. Mediates the transient calcium-dependent interaction of PYR/PYL/RCAR abscisic acid (ABA) receptors with the plasma membrane and thus regulates ABA sensitivity. The chain is Protein C2-DOMAIN ABA-RELATED 11 from Arabidopsis thaliana (Mouse-ear cress).